The following is a 129-amino-acid chain: Glycine cleavage system H protein (129 aa).

Residues 24 to 106 (LVRVGISAFA…HGEGWLLVLR (83 aa)) enclose the Lipoyl-binding domain. N6-lipoyllysine is present on K65.

Belongs to the GcvH family. As to quaternary structure, the glycine cleavage system is composed of four proteins: P, T, L and H. It depends on (R)-lipoate as a cofactor.

Functionally, the glycine cleavage system catalyzes the degradation of glycine. The H protein shuttles the methylamine group of glycine from the P protein to the T protein. This Parasynechococcus marenigrum (strain WH8102) protein is Glycine cleavage system H protein.